Consider the following 232-residue polypeptide: Nuclear transcription factor Y subunit nfyc-1 (232 aa).

A disordered region spans residues 191 to 232 (TVPTTSTNGPGHMSEDSFQDPNMHSDFHQRTSNSSVNRSHHN). Residues 220–232 (RTSNSSVNRSHHN) are compositionally biased toward polar residues.

Belongs to the NFYC/HAP5 subunit family. As to quaternary structure, forms two NF-Y heterotrimeric transcription factor complexes: the nfya-1-NF-Y complex is composed of nfya-1, nfyb-1 and nfyc-1, and the nfya-2-NF-Y complex is composed of nfya-2, nfyb-1 and nfyc-1. Interacts with nfyb-1; the interaction is direct and is required for the interaction with either nfya-1 or nfya-2, and subsequent binding of the complex to the 5'-CCAAT-3' box motif in DNA. Expressed in certain parts of the gonads with high expression in fertilized oocytes in the uterus and mature oocytes from the distal to the proximal arm of the gonad, but weak expression in the syncytial ovaries and immature oocytes at the beginning of the proximal arm of the gonad. Expressed in the excretory cell, secretory cells in the pharyngeal terminal bulb wall, in the small ganglia surrounding the pharynx and in the neurons running anteriorly to the sensory organs in the head. Not expressed in the intestine, the hypodermis or body wall muscle surrounding the pseudocoelomic space.

The protein resides in the nucleus. Its subcellular location is the cytoplasm. It localises to the perikaryon. Functionally, component of sequence-specific heterotrimeric transcription factor (nfya-1-NF-Y and nfya-2-NF-Y) complexes which specifically recognize a 5'-CCAAT-3' box motif found in the promoters of its target genes to regulate their expression and control cellular identity in particular tissue types. In association with the components in the NF-Y complexes, represses the expression of the T-box transcription factor tbx-2 throughout larval development, which most likely restricts its expression to certain tissues. May act to repress txb-2 expression in conjunction with tbx-2 itself, which has an autoregulatory role. In association with the components in the nfya-1-NF-Y complex, negatively regulates the expression of the homeobox protein egl-5 to spatially restrict its expression in tissues such as the head. May regulate egl-5 expression in association with the mes-2-mes-3-mes-6 complex. The chain is Nuclear transcription factor Y subunit nfyc-1 from Caenorhabditis elegans.